The sequence spans 304 residues: ATP synthase gamma chain (304 aa).

Belongs to the ATPase gamma chain family. As to quaternary structure, F-type ATPases have 2 components, CF(1) - the catalytic core - and CF(0) - the membrane proton channel. CF(1) has five subunits: alpha(3), beta(3), gamma(1), delta(1), epsilon(1). CF(0) has three main subunits: a, b and c.

Its subcellular location is the cell membrane. Its function is as follows. Produces ATP from ADP in the presence of a proton gradient across the membrane. The gamma chain is believed to be important in regulating ATPase activity and the flow of protons through the CF(0) complex. In Mycobacterium marinum (strain ATCC BAA-535 / M), this protein is ATP synthase gamma chain.